The sequence spans 415 residues: Autophagy-related protein 19 (415 aa).

The segment at 21-28 (YDECNKFQ) is ATG11-binding. Basic and acidic residues predominate over residues 126–135 (CREDAHEDPV). The segment at 126–150 (CREDAHEDPVSPKAGSEEEISPNST) is disordered. Phosphoserine occurs at positions 136 and 141. A coiled-coil region spans residues 157–187 (RECLDNFMKQLLKLEESLNKLELEQKVTNKE). Glycyl lysine isopeptide (Lys-Gly) (interchain with G-Cter in ubiquitin) cross-links involve residues K213 and K216. At S243 the chain carries Phosphoserine. The tract at residues 254 to 367 (VEPPNERSLQ…LRPPSRLSAE (114 aa)) is AMS1-binding. The interval 406–415 (NEKALTWEEL) is ATG8-binding. The WXXL motif lies at 412-415 (WEEL).

As to quaternary structure, interacts with the vacuolar aminopeptidase 1 (LAP4) precursor and mature forms. Also interacts with AMS1, APE4, ATG8 ATG11, and UBP3. Post-translationally, polyubiquitinated at Lys-213 and Lys-216. Deubiquitination by UBP3 is required for full activity of ATG19.

It localises to the preautophagosomal structure membrane. Its function is as follows. Cargo-receptor protein involved in the cytoplasm to vacuole transport (Cvt) and in autophagy. Recognizes cargo proteins, such as APE4, LAP3, LAP4 and AMS1 and delivers them to the pre-autophagosomal structure for eventual engulfment by the autophagosome and targeting to the vacuole. Involved in the organization of the preautophagosomal structure (PAS). ATG19 association with cargo protein is required to localize ATG11 to the PAS. Also involved in endoplasmic reticulum-specific autophagic process, in selective removal of ER-associated degradation (ERAD) substrates, and is essential for the survival of cells subjected to severe ER stress. Also plays a role in regulation of filamentous growth. The protein is Autophagy-related protein 19 (ATG19) of Saccharomyces cerevisiae (strain YJM789) (Baker's yeast).